Reading from the N-terminus, the 341-residue chain is Peroxisomal membrane protein import receptor PEX19 (341 aa).

Acidic residues predominate over residues 1-18 (MNENEYDNFDDLDDLLDE). Disordered regions lie at residues 1 to 26 (MNEN…LDEQ), 39 to 66 (DSEN…EDPE), 109 to 141 (VPRQ…FKNI), 293 to 312 (LGDS…NEEE), and 318 to 341 (LEID…CKQQ). A compositionally biased stretch (basic and acidic residues) spans 39–53 (DSENKEKNAESKDSD). S61 carries the phosphoserine modification. Positions 113–141 (QMEQGSSSLKSNSTDKGTLNGSNPGFKNI) are enriched in polar residues. S303 is modified (phosphoserine). Positions 330–341 (LDKELTDGCKQQ) are enriched in basic and acidic residues. C338 is subject to Cysteine methyl ester. Residue C338 is the site of S-farnesyl cysteine attachment. Positions 339-341 (KQQ) are cleaved as a propeptide — removed in mature form.

This sequence belongs to the peroxin-19 family. Interacts (farnesylated) with PEX3; farnesylation is required for this interaction. Interacts with PEX2, PEX5, PEX10, PEX11, PEX12, PEX13, PEX14, PEX17, PEX22, PEX25, PEX30 and PEX32; the interaction requires well-defined PEX19-binding sites within the peroxisomal membrane protein targeting signal (mPTS) of the PMPs and is independent on the presence of PEX3. Interacts with VPS1.

It localises to the cytoplasm. The protein resides in the peroxisome membrane. It is found in the endoplasmic reticulum membrane. Required for proper post-translational import and stabilization of peroxisomal membrane proteins (PMPs). Acts as a cytosolic import receptor for PMPs and delivers them to the docking factor PEX3 at the peroxisomal membrane for subsequent insertion into the membrane. Acts as a chaperone in stabilizing or maintaining PMPs in the lipid bilayer. Directs PEX17, a peripheral component of the peroxisomal matrix protein translocation machinery, to peroxisomes. Stabilizes VPS1, a protein required for peroxisomal fission, at the peroxisomal membrane. Also acts in conjunction with PEX3 in the formation of peroxisomes from preperoxisomal compartments at the endoplasmic reticulum during de novo peroxisome synthesis, probably via the import of additional PMPs. This Saccharomyces cerevisiae (strain YJM789) (Baker's yeast) protein is Peroxisomal membrane protein import receptor PEX19 (PEX19).